Reading from the N-terminus, the 151-residue chain is 3-dehydroquinate dehydratase 1 (151 aa).

The Proton acceptor role is filled by Tyr-24. Asn-75, His-81, and Asp-88 together coordinate substrate. His-101 (proton donor) is an active-site residue. Substrate-binding positions include 102–103 (IS) and Arg-112.

It belongs to the type-II 3-dehydroquinase family. Homododecamer.

It catalyses the reaction 3-dehydroquinate = 3-dehydroshikimate + H2O. The protein operates within metabolic intermediate biosynthesis; chorismate biosynthesis; chorismate from D-erythrose 4-phosphate and phosphoenolpyruvate: step 3/7. Its function is as follows. Catalyzes a trans-dehydration via an enolate intermediate. In Corynebacterium efficiens (strain DSM 44549 / YS-314 / AJ 12310 / JCM 11189 / NBRC 100395), this protein is 3-dehydroquinate dehydratase 1 (aroQ1).